A 156-amino-acid chain; its full sequence is 6,7-dimethyl-8-ribityllumazine synthase (156 aa).

5-amino-6-(D-ribitylamino)uracil is bound by residues F22, 57-59 (AYE), and 81-83 (TVI). 86-87 (GT) provides a ligand contact to (2S)-2-hydroxy-3-oxobutyl phosphate. H89 (proton donor) is an active-site residue. F114 lines the 5-amino-6-(D-ribitylamino)uracil pocket. R128 is a (2S)-2-hydroxy-3-oxobutyl phosphate binding site.

This sequence belongs to the DMRL synthase family. In terms of assembly, forms an icosahedral capsid composed of 60 subunits, arranged as a dodecamer of pentamers.

It catalyses the reaction (2S)-2-hydroxy-3-oxobutyl phosphate + 5-amino-6-(D-ribitylamino)uracil = 6,7-dimethyl-8-(1-D-ribityl)lumazine + phosphate + 2 H2O + H(+). Its pathway is cofactor biosynthesis; riboflavin biosynthesis; riboflavin from 2-hydroxy-3-oxobutyl phosphate and 5-amino-6-(D-ribitylamino)uracil: step 1/2. In terms of biological role, catalyzes the formation of 6,7-dimethyl-8-ribityllumazine by condensation of 5-amino-6-(D-ribitylamino)uracil with 3,4-dihydroxy-2-butanone 4-phosphate. This is the penultimate step in the biosynthesis of riboflavin. This chain is 6,7-dimethyl-8-ribityllumazine synthase, found in Yersinia pseudotuberculosis serotype O:1b (strain IP 31758).